The sequence spans 134 residues: Cerato-platanin (134 aa).

An N-terminal signal peptide occupies residues 1–14 (MKFSILPMIASAMA). The tract at residues 18–20 (SYD) is binding of oligomers of N-acetylglucosamine (GlcNAc). 3 binding of N-acetylglucosamine tetramer (GlcNAc-4) regions span residues 31-43 (SVACSNGDHGLMA), 65-68 (GWDS), and 91-95 (DSGRG). 2 disulfides stabilise this stretch: C34-C71 and C74-C129. The binding of oligomers of N-acetylglucosamine (GlcNAc) stretch occupies residues 113 to 116 (AGRV).

This sequence belongs to the cerato-platanin family. Monomer.

The protein resides in the secreted. The protein localises to the cell wall. Its function is as follows. Phytotoxin which causes production of phytoalexin in platanus acerifolia, platanus occidentalis and platanus orientalis. Induces cell necrosis in tobacco leaves, and in callus cells and leaves of P.acerifolia. Induces reactive oxygen species (ROS) synthesis, nitric oxide (NO) production and mitogen-activated protein kinases (MAPKs) phosphorylation in the leaves of A.thaliana and P.acerifolia. Results in H(2)O(2) production on the epidermis around the stomata, rapid closure of the stomata, reduced photosynthetic and CO(2) assimilation rate, and an increase in a number of volatile organic compound (VOC) emission in A.thaliana leaves. Induces overexpression of genes related to salicylic acid- and ethylene-signaling, camalexin synthesis, ROS production and oxidative stress, and genes of various receptor kinases, and down-regulation of a number of jasmonic acid (JA)-signaling genes in A.thaliana leaves. Renders resistance against C.platani in A.thaliana and P.acerifolia. Renders localised resistance of A.thaliana against infection by virulent foliar pathogens B.cinerea and P.syringae pv. tomato. Binds cellulose analog carboxymethyl cellulose (CMC). Expansin-like protein with probable fungal and plant cell wall loosening activity based on its non-enzymatic cellulose weakening activity in vitro. Increases glucose production by cellulase after pre-incubation of cellulose with this protein. In contrast, according to PubMed:23512479, no synergistic effect with cellulases. May have a structural role in the fungal cell wall based on its ability to bind chitin, but does not bind beta-1,3-glucan. This chain is Cerato-platanin, found in Ceratocystis fimbriata f. sp. platani.